We begin with the raw amino-acid sequence, 184 residues long: Protein N-terminal glutamine amidohydrolase (184 aa).

Residues cysteine 14, histidine 63, and aspartate 78 contribute to the active site.

Belongs to the NTAQ1 family. As to quaternary structure, monomer.

The enzyme catalyses N-terminal L-glutaminyl-[protein] + H2O = N-terminal L-glutamyl-[protein] + NH4(+). Its function is as follows. Mediates the side-chain deamidation of N-terminal glutamine residues to glutamate, an important step in N-end rule pathway of protein degradation. Conversion of the resulting N-terminal glutamine to glutamate renders the protein susceptible to arginylation, polyubiquitination and degradation as specified by the N-end rule. Does not act on substrates with internal or C-terminal glutamine and does not act on non-glutamine residues in any position. This is Protein N-terminal glutamine amidohydrolase from Caenorhabditis elegans.